A 621-amino-acid chain; its full sequence is Nuclear distribution protein nudE homolog 1 (621 aa).

Composition is skewed to polar residues over residues 1 to 20 (MPSA…SRSD) and 231 to 263 (RSPS…TLKT). 4 disordered regions span residues 1-21 (MPSA…RSDQ), 218-372 (ELQN…PKSG), 389-537 (ERVQ…GVVN), and 569-621 (ISTP…GETY). Residues 18-219 (RSDQLAWYKS…IHEKLRNAEL (202 aa)) are a coiled coil. Composition is skewed to low complexity over residues 264–288 (SLMS…RKSM) and 300–310 (SASDSSFGSRS). Over residues 323–341 (SRATSYAFTSNRPTPSVTN) the composition is skewed to polar residues. Low complexity-rich tracts occupy residues 353 to 362 (NENTNKHNNN), 404 to 414 (SPSRTSSRSGS), and 469 to 496 (SRPS…PSTR). Residues 599–613 (DRLEGDMGPPERKSN) are compositionally biased toward basic and acidic residues.

It belongs to the nudE family. In terms of assembly, self-associates. Interacts with nudF.

It localises to the cytoplasm. The protein resides in the cytoskeleton. Functionally, required for nuclear migration within hyphae during vegetative growth. The sequence is that of Nuclear distribution protein nudE homolog 1 (nde1) from Aspergillus fumigatus (strain ATCC MYA-4609 / CBS 101355 / FGSC A1100 / Af293) (Neosartorya fumigata).